Reading from the N-terminus, the 196-residue chain is Peptidyl-tRNA hydrolase (196 aa).

Y19 lines the tRNA pocket. H24 functions as the Proton acceptor in the catalytic mechanism. TRNA-binding residues include Y68, N70, and N116.

Belongs to the PTH family. In terms of assembly, monomer.

It localises to the cytoplasm. It carries out the reaction an N-acyl-L-alpha-aminoacyl-tRNA + H2O = an N-acyl-L-amino acid + a tRNA + H(+). Its function is as follows. Hydrolyzes ribosome-free peptidyl-tRNAs (with 1 or more amino acids incorporated), which drop off the ribosome during protein synthesis, or as a result of ribosome stalling. Catalyzes the release of premature peptidyl moieties from peptidyl-tRNA molecules trapped in stalled 50S ribosomal subunits, and thus maintains levels of free tRNAs and 50S ribosomes. The sequence is that of Peptidyl-tRNA hydrolase from Aromatoleum aromaticum (strain DSM 19018 / LMG 30748 / EbN1) (Azoarcus sp. (strain EbN1)).